A 206-amino-acid chain; its full sequence is LexA repressor (206 aa).

The H-T-H motif DNA-binding region spans 28 to 48 (RAEIATRLGFKSANAAEEHLK). Residues serine 123 and lysine 160 each act as for autocatalytic cleavage activity in the active site.

Belongs to the peptidase S24 family. Homodimer.

It carries out the reaction Hydrolysis of Ala-|-Gly bond in repressor LexA.. Its function is as follows. Represses a number of genes involved in the response to DNA damage (SOS response), including recA and lexA. In the presence of single-stranded DNA, RecA interacts with LexA causing an autocatalytic cleavage which disrupts the DNA-binding part of LexA, leading to derepression of the SOS regulon and eventually DNA repair. The chain is LexA repressor from Shewanella sp. (strain MR-7).